Consider the following 116-residue polypeptide: Holo-[acyl-carrier-protein] synthase (116 aa).

Asp-5 and Glu-50 together coordinate Mg(2+).

Belongs to the P-Pant transferase superfamily. AcpS family. It depends on Mg(2+) as a cofactor.

It localises to the cytoplasm. It carries out the reaction apo-[ACP] + CoA = holo-[ACP] + adenosine 3',5'-bisphosphate + H(+). In terms of biological role, transfers the 4'-phosphopantetheine moiety from coenzyme A to a Ser of acyl-carrier-protein. This is Holo-[acyl-carrier-protein] synthase from Nitratiruptor sp. (strain SB155-2).